Consider the following 562-residue polypeptide: Tissue-type plasminogen activator (562 aa).

The N-terminal stretch at 1-20 (MNAMKRGLCCVLLLCGAVFA) is a signal peptide. Residues 21–32 (LPSQEIHARVRR) constitute a propeptide that is removed on maturation. Residues 33–35 (GAR) constitute a propeptide, removed by plasmin. Positions 39 to 81 (VICRDEKTQMIYQQHQSWLRPVLRSNRVEYCWCNSGRAQCHSV) constitute a Fibronectin type-I domain. 17 cysteine pairs are disulfide-bonded: C41–C71, C69–C78, C86–C97, C91–C108, C110–C119, C127–C208, C148–C190, C179–C203, C215–C296, C236–C278, C267–C291, C299–C430, C342–C358, C350–C419, C444–C519, C476–C492, and C509–C537. The tract at residues 42 to 52 (RDEKTQMIYQQ) is important for binding to annexin A2. One can recognise an EGF-like domain in the interval 82–120 (PVRSCSEPRCFNGGTCQQALYFSDFVCQCPEGFAGKCCE). O-linked (Fuc) threonine glycosylation occurs at T96. Kringle domains follow at residues 126–208 (TCYE…TPAC) and 214–296 (DCYF…VPSC). N-linked (GlcNAc...) asparagine glycosylation is present at N152. The 251-residue stretch at 311–561 (IKGGLFADIA…YLDWIHDNMR (251 aa)) folds into the Peptidase S1 domain. Catalysis depends on charge relay system residues H357 and D406. N483 is a glycosylation site (N-linked (GlcNAc...) asparagine). The Charge relay system role is filled by S513.

This sequence belongs to the peptidase S1 family. Heterodimer of chain A and chain B held by a disulfide bond. Binds to fibrin with high affinity. This interaction leads to an increase in the catalytic efficiency of the enzyme due to an increase in affinity for plasminogen. Similarly, binding to heparin increases the activation of plasminogen. Binds to annexin A2, cytokeratin-8, fibronectin and laminin. Binds to mannose receptor and the low-density lipoprotein receptor-related protein (LRP1); these proteins are involved in TPA clearance. Binds LRP1B; binding is followed by internalization and degradation. Forms heterodimer with SERPINA5. Interacts with SERPINE1. In complex with SERPINE1, interacts with SORL1. The single chain, almost fully active enzyme, can be further processed into a two-chain fully active form by a cleavage after Arg-310 catalyzed by plasmin, tissue kallikrein or factor Xa.

It localises to the secreted. The protein resides in the extracellular space. The enzyme catalyses Specific cleavage of Arg-|-Val bond in plasminogen to form plasmin.. Inhibited by SERPINA5. Inhibited by SERPINE1. Its function is as follows. Converts the abundant, but inactive, zymogen plasminogen to plasmin by hydrolyzing a single Arg-Val bond in plasminogen. By controlling plasmin-mediated proteolysis, it plays an important role in tissue remodeling and degradation, in cell migration and many other physiopathological events. During oocyte activation, plays a role in cortical granule reaction in the zona reaction, which contributes to the block to polyspermy. In Pongo abelii (Sumatran orangutan), this protein is Tissue-type plasminogen activator (PLAT).